Consider the following 449-residue polypeptide: Agmatine hydroxycinnamoyltransferase 1 (449 aa).

Residues histidine 153 and aspartate 392 each act as proton acceptor in the active site.

Belongs to the plant acyltransferase family. Highly expressed in roots. Expressed at low levels in flowers.

Its function is as follows. Hydroxycinnamoyl transferase that catalyzes the transfer of an acyl from p-coumaryol-CoA to agmatine, to produce coumaroyl agmatine. Can use feruloyl-CoA, caffeoyl-CoA and sinapoyl-CoA as acyl donors. Seems to be able to transfer the acyl group from p-coumaroyl-CoA and feruloyl-CoA to the acyl acceptors putrescine and spermidine. This is Agmatine hydroxycinnamoyltransferase 1 from Oryza sativa subsp. japonica (Rice).